The following is a 134-amino-acid chain: Large ribosomal subunit protein uL16c (134 aa).

Belongs to the universal ribosomal protein uL16 family. In terms of assembly, part of the 50S ribosomal subunit.

Its subcellular location is the plastid. The protein localises to the chloroplast. The polypeptide is Large ribosomal subunit protein uL16c (Solanum lycopersicum (Tomato)).